The primary structure comprises 26 residues: Unknown protein 16 (26 aa).

The segment at 1 to 26 (AINSESGVRSVVPQPCNALPNQGPEK) is disordered.

The chain is Unknown protein 16 from Pseudotsuga menziesii (Douglas-fir).